A 70-amino-acid polypeptide reads, in one-letter code: Large ribosomal subunit protein eL24 (70 aa).

Positions 7, 10, 33, and 37 each coordinate Zn(2+). Residues 7-37 form a C4-type zinc finger; that stretch reads CSFCGYEIEPGKGKMVVEKDGTVLYFCSSKC.

This sequence belongs to the eukaryotic ribosomal protein eL24 family. Part of the 50S ribosomal subunit. Forms a cluster with proteins L3 and L14. The cofactor is Zn(2+).

Its function is as follows. Binds to the 23S rRNA. This Methanocaldococcus jannaschii (strain ATCC 43067 / DSM 2661 / JAL-1 / JCM 10045 / NBRC 100440) (Methanococcus jannaschii) protein is Large ribosomal subunit protein eL24.